Consider the following 81-residue polypeptide: Apolipoprotein C-I, acidic form (81 aa).

The first 24 residues, 1–24 (MRLFLSLLVVVLSMVLKGPTPAQG), serve as a signal peptide directing secretion.

This sequence belongs to the apolipoprotein C1 family.

It localises to the secreted. The protein is Apolipoprotein C-I, acidic form (APOC1A) of Macaca fascicularis (Crab-eating macaque).